A 346-amino-acid chain; its full sequence is Superficial pseudohyphal growth protein 1 (346 aa).

The tract at residues N289–A308 is disordered. Acidic residues predominate over residues G291–P305.

The protein resides in the nucleus. Probable transcription factor required for superficial pseudohyphal development in response to nitrogen starvation. The protein is Superficial pseudohyphal growth protein 1 (SFG1) of Saccharomyces cerevisiae (strain ATCC 204508 / S288c) (Baker's yeast).